Consider the following 206-residue polypeptide: 3-demethoxyubiquinol 3-hydroxylase (206 aa).

Residues E55, E85, H88, E137, E169, and H172 each coordinate Fe cation.

It belongs to the COQ7 family. Requires Fe cation as cofactor.

It localises to the cell membrane. The catalysed reaction is a 5-methoxy-2-methyl-3-(all-trans-polyprenyl)benzene-1,4-diol + AH2 + O2 = a 3-demethylubiquinol + A + H2O. It functions in the pathway cofactor biosynthesis; ubiquinone biosynthesis. Catalyzes the hydroxylation of 2-nonaprenyl-3-methyl-6-methoxy-1,4-benzoquinol during ubiquinone biosynthesis. This is 3-demethoxyubiquinol 3-hydroxylase from Azoarcus sp. (strain BH72).